The sequence spans 503 residues: WD repeat-containing protein 55 homolog (503 aa).

A disordered region spans residues 1-131 (MHTHNNFKTP…DSAAFDLDDL (131 aa)). 2 stretches are compositionally biased toward acidic residues: residues 12–23 (DADELDDLDDDM) and 37–56 (VGED…DMEA). The segment covering 59 to 76 (PNQNADENESISSDSSFD) has biased composition (polar residues). Acidic residues predominate over residues 78-96 (NAEDSSDSDDSMLEEDEAE). WD repeat units lie at residues 157–196 (KLED…NKLL), 201–242 (VHSK…KLYE), 244–282 (AHDD…PIFE), 285–324 (EVED…LYVQ), 327–366 (PYEE…YHCD), and 411–450 (QHNM…DFGD). Residues 483-503 (TKEDEDNADNNDAAAGPSNSA) are disordered.

The protein belongs to the WD repeat WDR55 family.

This Drosophila pseudoobscura pseudoobscura (Fruit fly) protein is WD repeat-containing protein 55 homolog.